A 404-amino-acid chain; its full sequence is Tryptophan synthase beta chain (404 aa).

Lys98 bears the N6-(pyridoxal phosphate)lysine mark.

Belongs to the TrpB family. Tetramer of two alpha and two beta chains. Pyridoxal 5'-phosphate is required as a cofactor.

It carries out the reaction (1S,2R)-1-C-(indol-3-yl)glycerol 3-phosphate + L-serine = D-glyceraldehyde 3-phosphate + L-tryptophan + H2O. It functions in the pathway amino-acid biosynthesis; L-tryptophan biosynthesis; L-tryptophan from chorismate: step 5/5. Its function is as follows. The beta subunit is responsible for the synthesis of L-tryptophan from indole and L-serine. This chain is Tryptophan synthase beta chain, found in Acidiphilium cryptum (strain JF-5).